Reading from the N-terminus, the 282-residue chain is MRPKANQNHKLKVLLVFLLATLILIFIVRSTLTSSQEHQTPQETRSTRCSGACNKLPRSLAQALIHYSTSVITPQQTLKEIAVSSRVLGKKSPCNFLVFGLGHDSLMWSSLNYGGRTVFLEEDEAWIKQIKRRFPMLESYHVTYDSKVNQADNLIEVGKGPECTAIGDPRYSMCQLALKGLPAEIYETGWDLIMVDAPTGYYDEAPGRMTAIYTAGMMARNRKQGGETDVFVHDVNREIEDKFSKAFLCEGYMKKQEGRLRHFIIPSYRDGSESESNRPFCP.

Residues 13–33 (VLLVFLLATLILIFIVRSTLT) traverse the membrane as a helical segment.

The protein belongs to the methyltransferase superfamily. As to expression, expressed in rosette leaves, stems, flowers and siliques.

The protein resides in the golgi apparatus membrane. The catalysed reaction is glucuronoxylan D-glucuronate + n S-adenosyl-L-methionine = glucuronoxylan 4-O-methyl-D-glucuronate + n S-adenosyl-L-homocysteine + n H(+). Functionally, methyltransferase catalyzing 4-O-methylation of glucuronic acid side chains on xylan. This chain is Glucuronoxylan 4-O-methyltransferase 1 (GXM1), found in Arabidopsis thaliana (Mouse-ear cress).